We begin with the raw amino-acid sequence, 49 residues long: Lysozyme C (49 aa).

One can recognise a C-type lysozyme domain in the interval 1–49 (SKMKKCEFAKIAKEQHMDGYHGVSLADWVCLVNNESDFNTKAINRNKGI). Glu35 is a catalytic residue.

It belongs to the glycosyl hydrolase 22 family. As to quaternary structure, monomer.

The protein resides in the secreted. It carries out the reaction Hydrolysis of (1-&gt;4)-beta-linkages between N-acetylmuramic acid and N-acetyl-D-glucosamine residues in a peptidoglycan and between N-acetyl-D-glucosamine residues in chitodextrins.. Lysozymes have primarily a bacteriolytic function; those in tissues and body fluids are associated with the monocyte-macrophage system and enhance the activity of immunoagents. This chain is Lysozyme C (LYZ), found in Pseudocheirus peregrinus (Common ring-tailed possum).